The chain runs to 385 residues: Trichodiene synthase (385 aa).

This sequence belongs to the trichodiene synthase family.

It carries out the reaction (2E,6E)-farnesyl diphosphate = trichodiene + diphosphate. The protein operates within sesquiterpene biosynthesis; trichothecene biosynthesis. Its function is as follows. TS is a member of the terpene cyclase group of enzymes. It catalyzes the isomerization and cyclization of farnesyl pyro-phosphate to form trichodiene, the first cyclic intermediate in the biosynthetic pathway for trichothecenes. It serves to branch trichothecene biosynthesis from the isoprenoid pathway. This chain is Trichodiene synthase (TRI5), found in Paramyrothecium roridum (Myrothecium leaf spot fungus).